Here is a 254-residue protein sequence, read N- to C-terminus: MQEYFAKRIIPCLDVDKGRVVKGVNFVGLKDAGDPVEVAKRYNEEGADEITFLDITATYEERDTIVHIVEEVAKEVFIPLTVGGGIRELDDIYKLLAVGCDKVSINSAAVKKPEFVDEAAKRFGSQCIVVAIDAKRVGDGWHVFTAGGRHDSGKDAIEWAKEVYDRGAGEILLTSMDADGTKAGYDLELTRAISDAVDIPVIASGGAGTMEHIKDAFTKGHADAALAASIFHFKEIDIMELKHYLHNEGIPVRL.

Residues Asp14 and Asp133 contribute to the active site.

The protein belongs to the HisA/HisF family. Heterodimer of HisH and HisF.

Its subcellular location is the cytoplasm. The catalysed reaction is 5-[(5-phospho-1-deoxy-D-ribulos-1-ylimino)methylamino]-1-(5-phospho-beta-D-ribosyl)imidazole-4-carboxamide + L-glutamine = D-erythro-1-(imidazol-4-yl)glycerol 3-phosphate + 5-amino-1-(5-phospho-beta-D-ribosyl)imidazole-4-carboxamide + L-glutamate + H(+). Its pathway is amino-acid biosynthesis; L-histidine biosynthesis; L-histidine from 5-phospho-alpha-D-ribose 1-diphosphate: step 5/9. IGPS catalyzes the conversion of PRFAR and glutamine to IGP, AICAR and glutamate. The HisF subunit catalyzes the cyclization activity that produces IGP and AICAR from PRFAR using the ammonia provided by the HisH subunit. This chain is Imidazole glycerol phosphate synthase subunit HisF, found in Nitratiruptor sp. (strain SB155-2).